A 124-amino-acid polypeptide reads, in one-letter code: Small ribosomal subunit protein eS6 (124 aa).

Belongs to the eukaryotic ribosomal protein eS6 family.

This Thermoplasma acidophilum (strain ATCC 25905 / DSM 1728 / JCM 9062 / NBRC 15155 / AMRC-C165) protein is Small ribosomal subunit protein eS6.